Consider the following 197-residue polypeptide: dITP/XTP pyrophosphatase (197 aa).

10 to 15 (SHNGGK) contributes to the substrate binding site. Residues glutamate 41 and aspartate 70 each contribute to the Mg(2+) site. Aspartate 70 functions as the Proton acceptor in the catalytic mechanism. Residues serine 71, 154 to 157 (FGYD), lysine 177, and 182 to 183 (HR) each bind substrate.

The protein belongs to the HAM1 NTPase family. In terms of assembly, homodimer. Mg(2+) is required as a cofactor.

The catalysed reaction is XTP + H2O = XMP + diphosphate + H(+). The enzyme catalyses dITP + H2O = dIMP + diphosphate + H(+). It catalyses the reaction ITP + H2O = IMP + diphosphate + H(+). Pyrophosphatase that catalyzes the hydrolysis of nucleoside triphosphates to their monophosphate derivatives, with a high preference for the non-canonical purine nucleotides XTP (xanthosine triphosphate), dITP (deoxyinosine triphosphate) and ITP. Seems to function as a house-cleaning enzyme that removes non-canonical purine nucleotides from the nucleotide pool, thus preventing their incorporation into DNA/RNA and avoiding chromosomal lesions. This is dITP/XTP pyrophosphatase from Pseudomonas syringae pv. tomato (strain ATCC BAA-871 / DC3000).